A 356-amino-acid polypeptide reads, in one-letter code: Tricetin 3',4',5'-O-trimethyltransferase (356 aa).

123–129 contacts substrate; that stretch reads MNQDKVL. Positions 155 to 173 are substrate binding; it reads AFEYHGTDPRFNRVFNEGM. S-adenosyl-L-methionine-binding residues include Gly-201, Asp-224, Asp-244, Met-245, and Lys-258. His-262 (proton acceptor) is an active-site residue.

The protein belongs to the class I-like SAM-binding methyltransferase superfamily. Cation-independent O-methyltransferase family. COMT subfamily. As to quaternary structure, homodimer. The monomer is fully active and dimerization is not required for sequential methylation. Expressed in roots, stems and leaves.

It carries out the reaction tricetin + 3 S-adenosyl-L-methionine = 3',4',5'-O-trimethyltricetin + 3 S-adenosyl-L-homocysteine + 3 H(+). Flavonoid B-ring-specific O-methyltransferase with a preference for flavones &gt; dihydroflavones &gt; flavonols that possess at least two B-ring hydroxyl groups. Active with tricetin, 5-hydroxyferulic acid, luteolin, quercitin, eriodictyol, quercetagetin, taxifolin, gossypetin and myricetin. No activity with naringenin, apigenin, kaempferol, 7,8-dihydroxy- or 5,7,8-trihydroxy flavones, chlorogenic acid, gallic acid or daphnetin. Catalyzes the sequential O-methylation of tricetin via 3'-O-methyltricetin, 3',5'-O-methyltricetin to 3',4',5'-O-trimethyltricetin. May also be involved in S lignin biosynthesis. This Triticum aestivum (Wheat) protein is Tricetin 3',4',5'-O-trimethyltransferase (OMT2).